The following is a 209-amino-acid chain: Small ribosomal subunit protein uS4 (209 aa).

In terms of domain architecture, S4 RNA-binding spans 98-164 (SRLDNVVYRG…TPFIVARETA (67 aa)).

It belongs to the universal ribosomal protein uS4 family. As to quaternary structure, part of the 30S ribosomal subunit. Contacts protein S5. The interaction surface between S4 and S5 is involved in control of translational fidelity.

One of the primary rRNA binding proteins, it binds directly to 16S rRNA where it nucleates assembly of the body of the 30S subunit. Functionally, with S5 and S12 plays an important role in translational accuracy. This Frankia casuarinae (strain DSM 45818 / CECT 9043 / HFP020203 / CcI3) protein is Small ribosomal subunit protein uS4.